A 286-amino-acid polypeptide reads, in one-letter code: UDP-3-O-acyl-N-acetylglucosamine deacetylase (286 aa).

Zn(2+) is bound by residues histidine 79, histidine 237, and aspartate 241. Histidine 264 functions as the Proton donor in the catalytic mechanism.

The protein belongs to the LpxC family. Requires Zn(2+) as cofactor.

The enzyme catalyses a UDP-3-O-[(3R)-3-hydroxyacyl]-N-acetyl-alpha-D-glucosamine + H2O = a UDP-3-O-[(3R)-3-hydroxyacyl]-alpha-D-glucosamine + acetate. It functions in the pathway glycolipid biosynthesis; lipid IV(A) biosynthesis; lipid IV(A) from (3R)-3-hydroxytetradecanoyl-[acyl-carrier-protein] and UDP-N-acetyl-alpha-D-glucosamine: step 2/6. Functionally, catalyzes the hydrolysis of UDP-3-O-myristoyl-N-acetylglucosamine to form UDP-3-O-myristoylglucosamine and acetate, the committed step in lipid A biosynthesis. This Chlamydia muridarum (strain MoPn / Nigg) protein is UDP-3-O-acyl-N-acetylglucosamine deacetylase.